A 394-amino-acid chain; its full sequence is NAD(P)H-quinone oxidoreductase subunit H 2 (394 aa).

It belongs to the complex I 49 kDa subunit family. As to quaternary structure, NDH-1 can be composed of about 15 different subunits; different subcomplexes with different compositions have been identified which probably have different functions.

The protein resides in the cell inner membrane. It carries out the reaction a plastoquinone + NADH + (n+1) H(+)(in) = a plastoquinol + NAD(+) + n H(+)(out). The enzyme catalyses a plastoquinone + NADPH + (n+1) H(+)(in) = a plastoquinol + NADP(+) + n H(+)(out). Its function is as follows. NDH-1 shuttles electrons from an unknown electron donor, via FMN and iron-sulfur (Fe-S) centers, to quinones in the respiratory and/or the photosynthetic chain. The immediate electron acceptor for the enzyme in this species is believed to be plastoquinone. Couples the redox reaction to proton translocation, and thus conserves the redox energy in a proton gradient. Cyanobacterial NDH-1 also plays a role in inorganic carbon-concentration. The protein is NAD(P)H-quinone oxidoreductase subunit H 2 of Gloeobacter violaceus (strain ATCC 29082 / PCC 7421).